A 633-amino-acid chain; its full sequence is Chaperone protein HtpG (633 aa).

Residues 1 to 344 (MSLQPQAETL…SNDLPLNISR (344 aa)) form an a; substrate-binding region. The tract at residues 345–560 (ELLQSNEVIN…ENEMSGHLQR (216 aa)) is b. The c stretch occupies residues 561–633 (LLIQTGQDFM…KGLNELLLDS (73 aa)).

The protein belongs to the heat shock protein 90 family. In terms of assembly, homodimer.

It is found in the cytoplasm. Its function is as follows. Molecular chaperone. Has ATPase activity. The sequence is that of Chaperone protein HtpG from Coxiella burnetii (strain RSA 331 / Henzerling II).